Reading from the N-terminus, the 35-residue chain is uncharacterized protein (35 aa).

Residues 1–18 form the signal peptide; sequence MRSLVFVQLSLLSWEIFC.

This is an uncharacterized protein from Saccharomyces cerevisiae (strain ATCC 204508 / S288c) (Baker's yeast).